The primary structure comprises 199 residues: NAD(P)H dehydrogenase (quinone) (199 aa).

The 187-residue stretch at 4-190 folds into the Flavodoxin-like domain; the sequence is VLVLYYSAYG…DGARYQGRKI (187 aa). FMN-binding positions include 10–15 and 78–80; these read SAYGHI and TRF. Tyrosine 12 contacts NAD(+). A substrate-binding site is contributed by tryptophan 98. FMN contacts are provided by residues 113 to 119 and histidine 134; that span reads STATQHG.

Belongs to the WrbA family. It depends on FMN as a cofactor.

It carries out the reaction a quinone + NADH + H(+) = a quinol + NAD(+). The catalysed reaction is a quinone + NADPH + H(+) = a quinol + NADP(+). The polypeptide is NAD(P)H dehydrogenase (quinone) (Xanthobacter autotrophicus (strain ATCC BAA-1158 / Py2)).